The sequence spans 480 residues: MHTKTIVELYKGLKNKDFSCVELTQYYLSRINQSKLNAFITVTDELALVQAQVADDKIALGNASILTGIPYAHKDIFCTKGVKTSAGSKMLDTFIAPYDATVSQKLNQMNLVMLGKTNMDEFAMGSSNENSFYNAVKNPWNYLKIPGGSSGGSAASVAGGLSCFATGTDTGGSIRQPASLCGITGLKPTYGRISRYGIIAYASSFDQAGIMTKTSQDAAIVLNIMAGFDEKDSTSAEQKVPDYTTNLNNSLQGLIIGLPKEFFLSGLDNEVANNIMFAVKEFESMGAIVKEVSLPNSVYAIPTYYIIASCECSSNLSRLDGVRYGYRSKESKNLEDLYLSSRSEGFGEEVKRRIMIGTYALSTGYYDAYYLKAQKVRRLISNDFKKVFEKVDVIMGPVSPTTAFDLGSVKDPVSMYLADIYTLSVNLAGLPGMSIPVGFAQDLPVGLQLIGNYWSESKLLNIAHQFQLQTDWHLRIPQEC.

Residues K74 and S149 each act as charge relay system in the active site. S173 acts as the Acyl-ester intermediate in catalysis.

Belongs to the amidase family. GatA subfamily. In terms of assembly, heterotrimer of A, B and C subunits.

The catalysed reaction is L-glutamyl-tRNA(Gln) + L-glutamine + ATP + H2O = L-glutaminyl-tRNA(Gln) + L-glutamate + ADP + phosphate + H(+). Its function is as follows. Allows the formation of correctly charged Gln-tRNA(Gln) through the transamidation of misacylated Glu-tRNA(Gln) in organisms which lack glutaminyl-tRNA synthetase. The reaction takes place in the presence of glutamine and ATP through an activated gamma-phospho-Glu-tRNA(Gln). The protein is Glutamyl-tRNA(Gln) amidotransferase subunit A of Vesicomyosocius okutanii subsp. Calyptogena okutanii (strain HA).